Consider the following 227-residue polypeptide: Ribonuclease 3 (227 aa).

The region spanning 4 to 133 (FEELEKLLDY…LIAAIYLDSD (130 aa)) is the RNase III domain. Glutamate 46 provides a ligand contact to Mg(2+). Aspartate 50 is an active-site residue. Positions 119 and 122 each coordinate Mg(2+). Glutamate 122 is a catalytic residue. A DRBM domain is found at 158-226 (DPKTALQEWA…ARELLHKLKL (69 aa)).

This sequence belongs to the ribonuclease III family. Homodimer. Mg(2+) serves as cofactor.

The protein resides in the cytoplasm. The enzyme catalyses Endonucleolytic cleavage to 5'-phosphomonoester.. In terms of biological role, digests double-stranded RNA. Involved in the processing of primary rRNA transcript to yield the immediate precursors to the large and small rRNAs (23S and 16S). Processes some mRNAs, and tRNAs when they are encoded in the rRNA operon. Processes pre-crRNA and tracrRNA of type II CRISPR loci if present in the organism. The protein is Ribonuclease 3 of Rickettsia bellii (strain OSU 85-389).